We begin with the raw amino-acid sequence, 459 residues long: Beta-glucosidase (459 aa).

Glutamate 171 (proton donor) is an active-site residue. Glutamate 359 acts as the Nucleophile in catalysis.

It belongs to the glycosyl hydrolase 1 family.

The enzyme catalyses Hydrolysis of terminal, non-reducing beta-D-glucosyl residues with release of beta-D-glucose.. This chain is Beta-glucosidase (abg), found in Agrobacterium sp. (strain ATCC 21400).